The primary structure comprises 285 residues: Probable adenylate kinase 6, chloroplastic (285 aa).

A chloroplast-targeting transit peptide spans 1-33; it reads MAAISRAIRACAAAGSRRSMASSAKEVAAAGAR. Residue 63–68 coordinates ATP; that stretch reads GVGKGT. The tract at residues 83-112 is NMP; sequence ATGDLVRDALASPGPFSEQLAEIVNNGKLV. AMP-binding positions include Thr84, Arg89, 110 to 112, 140 to 143, and Gln147; these read KLV and GFPR. Residues 176-224 are LID; the sequence is GRRMCSQCGGNFNVASIDMEGENGGPRMYMPPLLPPPQCESKLITRPDD. Residues Arg177 and 186 to 187 each bind ATP; that span reads NF. AMP contacts are provided by Arg221 and Arg232.

This sequence belongs to the adenylate kinase family.

The protein resides in the plastid. The protein localises to the chloroplast. It carries out the reaction AMP + ATP = 2 ADP. Catalyzes the reversible transfer of the terminal phosphate group between ATP and AMP. Plays an important role in cellular energy homeostasis and in adenine nucleotide metabolism. The sequence is that of Probable adenylate kinase 6, chloroplastic from Oryza sativa subsp. japonica (Rice).